The primary structure comprises 756 residues: MTTQNTTPAGFTGNRNRYYNPVSKIQSLIHNLDAELVQLCKQCSVQKPLTSLNNSTSLGSHFSNFGALGGGSGSKTMGGSSSMGSNNFSPDSIGNLLARVRASTPLPRTVTSSPTAPEAQKRQMRNVYRTRVIDAYRNRRIFTVYGNYHTVRRALMRRGWLEKLPASRHAKLQSMSEDALLEHARRGNDYEAVVISKMINHFPAFFIWQGKGQRDLCAEVRPFRNRVRRSQFLDFSTKVGLVGCAEQERWYREDGVCGMSYPRFYRLGGNNLEERMAFIEDYQQTQARSLLLYVREHQPAELISENGTIFSTTLDFALGKVKKMVRHAEHYSLDDARIKPPTPAEIVENQTFMVQSTDVLKSNAKFKVSEKVMAEYARLAGLYLDQIESLRPDYRWDGSRNLWILKPGYQSRGIGIVIRSSLDDILQWTSNNQNKKYIVQKYIERPLLIYRTKFDIRQYMLLTITDTKVSIWTYRDCYLRFSSQEFTMDDLRESIHLTNNSVQKRYKNKTNRDSRLPKNNMWSLDQFKNYLRIMGAPDGSWSKTYNGFKQNLVAVVMASLDETELLQNAFELYGCDFMLDEHYNPILIEINSTPDLSPSTEITARICPMVLKDCIRVVVDLPKNPTAATGLFELAFEVNYSINKGADGKPLELNGKQMTLFENMPRMRNSPRTRLLRKILNNVKTSTTKKVEKVVEAPAKNVKNPTAKITKKKKLSASAGSSTAASAQPSTQNLTTKLILNPATRENLALQYTAPK.

The tract at residues 104 to 123 (TPLPRTVTSSPTAPEAQKRQ) is disordered. Residues 272–629 (LEERMAFIED…DLPKNPTAAT (358 aa)) form the TTL domain. ATP contacts are provided by residues 440–443 (QKYI), Lys-453, and Asp-455. A disordered region spans residues 709-736 (ITKKKKLSASAGSSTAASAQPSTQNLTT). The span at 716 to 727 (SASAGSSTAASA) shows a compositional bias: low complexity.

Its subcellular location is the cytoplasm. The protein resides in the cytoskeleton. It localises to the nucleus. Its function is as follows. Essential glycylase which modifies both tubulin and non-tubulin proteins, generating side chains of glycine on the gamma-carboxyl groups of specific glutamate residues of target proteins. Monoglycylates alpha-tubulin by adding a single glycine chain to generate monoglycine side chains, but is not involved in elongation step to generate polyglycine side chains on alpha-tubulin. Has the ability to both mono- and polyglycylate non-tubulin proteins such as up (Troponin T). Required for early steps of spermatogenesis. The chain is Tubulin glycylase 3B (TTLL3B) from Drosophila melanogaster (Fruit fly).